A 224-amino-acid polypeptide reads, in one-letter code: Ribose-5-phosphate isomerase A (224 aa).

Residues 26-29 (TGST), 81-84 (DGAD), and 94-97 (KGGG) each bind substrate. The active-site Proton acceptor is the E103. K121 is a binding site for substrate.

Belongs to the ribose 5-phosphate isomerase family. In terms of assembly, homodimer.

The catalysed reaction is aldehydo-D-ribose 5-phosphate = D-ribulose 5-phosphate. It functions in the pathway carbohydrate degradation; pentose phosphate pathway; D-ribose 5-phosphate from D-ribulose 5-phosphate (non-oxidative stage): step 1/1. Its function is as follows. Catalyzes the reversible conversion of ribose-5-phosphate to ribulose 5-phosphate. This is Ribose-5-phosphate isomerase A from Listeria monocytogenes serotype 4b (strain F2365).